The sequence spans 92 residues: Small ribosomal subunit protein uS19 (92 aa).

The protein belongs to the universal ribosomal protein uS19 family.

In terms of biological role, protein S19 forms a complex with S13 that binds strongly to the 16S ribosomal RNA. This is Small ribosomal subunit protein uS19 from Leptospira biflexa serovar Patoc (strain Patoc 1 / Ames).